We begin with the raw amino-acid sequence, 424 residues long: O-methyltransferase aunD (424 aa).

An S-adenosyl-L-methionine-binding site is contributed by Asp-275. The active-site Proton acceptor is His-326.

This sequence belongs to the class I-like SAM-binding methyltransferase superfamily. Cation-independent O-methyltransferase family.

The protein operates within secondary metabolite biosynthesis. Functionally, O-methyltransferase; part of the gene cluster that mediates the biosynthesis of aurasperone B, a dimeric gamma-naphthopyrone. The first step in the biosynthesis of aurasperone B is the production of gamma-naphthopyrone precursor YWA1 by the non-reducing polyketide synthase albA, via condensation of one acetyl-CoA starter unit with 6 malonyl-CoA units. YWA1 is then methylated by aunE at position C-6 to yield foncesin which is further methylated at position C-8 by aunD to produce fonsecin B. A key enzyme in the biosynthetic pathway is the cytochrome P450 monooxygenase aunB which catalyzes the oxidative dimerization of fonsecin B to aurasperone B. AunB also catalyzes the oxidative dimerization of rubrofusarin B into aurasperone A. The protein is O-methyltransferase aunD of Aspergillus niger (strain ATCC MYA-4892 / CBS 513.88 / FGSC A1513).